The sequence spans 128 residues: uncharacterized protein (128 aa).

A disordered region spans residues 25–61 (LPNRLPEGSTVGPKPDSSWEAGSQGNWGLTSSGAGQD). Over residues 44–61 (EAGSQGNWGLTSSGAGQD) the composition is skewed to polar residues.

This is an uncharacterized protein from Homo sapiens (Human).